The following is a 464-amino-acid chain: tRNA modification GTPase MnmE (464 aa).

R27, E90, and K129 together coordinate (6S)-5-formyl-5,6,7,8-tetrahydrofolate. Residues 222 to 384 enclose the TrmE-type G domain; sequence GITLVLAGSV…LYDKIRTLIS (163 aa). Residues 232-237, 251-257, and 276-279 contribute to the GTP site; these read NAGKSS, SSYPGTT, and DTAG. Positions 236 and 257 each coordinate Mg(2+). K464 provides a ligand contact to (6S)-5-formyl-5,6,7,8-tetrahydrofolate.

This sequence belongs to the TRAFAC class TrmE-Era-EngA-EngB-Septin-like GTPase superfamily. TrmE GTPase family. In terms of assembly, homodimer. Heterotetramer of two MnmE and two MnmG subunits. The cofactor is K(+).

The protein resides in the cytoplasm. In terms of biological role, exhibits a very high intrinsic GTPase hydrolysis rate. Involved in the addition of a carboxymethylaminomethyl (cmnm) group at the wobble position (U34) of certain tRNAs, forming tRNA-cmnm(5)s(2)U34. The sequence is that of tRNA modification GTPase MnmE from Borreliella afzelii (strain PKo) (Borrelia afzelii).